Consider the following 254-residue polypeptide: Alcohol dehydrogenase 1 (254 aa).

Residue 10-33 (FVAGLGGIGFDTSREIVKSGPKNL) coordinates NAD(+). Ser-138 is a binding site for substrate. Tyr-151 functions as the Proton acceptor in the catalytic mechanism.

Belongs to the short-chain dehydrogenases/reductases (SDR) family. Homodimer.

It catalyses the reaction a primary alcohol + NAD(+) = an aldehyde + NADH + H(+). It carries out the reaction a secondary alcohol + NAD(+) = a ketone + NADH + H(+). The polypeptide is Alcohol dehydrogenase 1 (Adh1) (Drosophila navojoa (Fruit fly)).